A 478-amino-acid chain; its full sequence is Violaxanthin de-epoxidase, chloroplastic (478 aa).

The stretch at 388–453 (LVERLEKKVE…RELSKEEMDV (66 aa)) forms a coiled coil.

It belongs to the calycin superfamily. Lipocalin family.

The protein resides in the plastid. It is found in the chloroplast thylakoid membrane. The enzyme catalyses all-trans-violaxanthin + 2 L-ascorbate = all-trans-zeaxanthin + 2 L-dehydroascorbate + 2 H2O. Functionally, part of the xanthophyll (or violaxanthin) cycle for controlling the concentration of zeaxanthin in chloroplasts. Catalyzes the two-step mono de-epoxidation reaction. Stereospecific for all-trans xanthophylls. Zeaxanthin induces the dissipation of excitation energy in the chlorophyll of the light-harvesting protein complex of photosystem II. The sequence is that of Violaxanthin de-epoxidase, chloroplastic (VDE1) from Nicotiana tabacum (Common tobacco).